The sequence spans 181 residues: Glutamyl-tRNA(Gln) amidotransferase subunit C, chloroplastic/mitochondrial (181 aa).

The protein belongs to the GatC family. As to quaternary structure, subunit of the heterotrimeric GatCAB amidotransferase (AdT) complex, composed of A, B and C subunits.

Its subcellular location is the mitochondrion. It localises to the plastid. The protein localises to the chloroplast. It catalyses the reaction L-glutamyl-tRNA(Gln) + L-glutamine + ATP + H2O = L-glutaminyl-tRNA(Gln) + L-glutamate + ADP + phosphate + H(+). Functionally, allows the formation of correctly charged Gln-tRNA(Gln) through the transamidation of misacylated Glu-tRNA(Gln) in chloroplasts and mitochondria. The reaction takes place in the presence of glutamine and ATP through an activated gamma-phospho-Glu-tRNA(Gln). This is Glutamyl-tRNA(Gln) amidotransferase subunit C, chloroplastic/mitochondrial from Picea sitchensis (Sitka spruce).